The following is a 378-amino-acid chain: Mannitol-1-phosphate 5-dehydrogenase (378 aa).

NAD(+) is bound at residue 4-15 (SVHFGAGNIGRG).

This sequence belongs to the mannitol dehydrogenase family.

The catalysed reaction is D-mannitol 1-phosphate + NAD(+) = beta-D-fructose 6-phosphate + NADH + H(+). The chain is Mannitol-1-phosphate 5-dehydrogenase from Streptococcus pneumoniae (strain Hungary19A-6).